A 111-amino-acid polypeptide reads, in one-letter code: Cell division protein FtsB (111 aa).

Topologically, residues 1–3 (MRL) are cytoplasmic. The chain crosses the membrane as a helical span at residues 4–21 (ITLFLLLLLLAIQYPLWL). Residues 22-111 (GKGGWLRVWD…PPPAGQQAHH (90 aa)) are Periplasmic-facing. A coiled-coil region spans residues 31-64 (DMQKQVTAQNQRNAELKQRNTKLEGEVKDLKEGT). A disordered region spans residues 89-111 (APAPKTSETPLPPPPPAGQQAHH).

This sequence belongs to the FtsB family. As to quaternary structure, part of a complex composed of FtsB, FtsL and FtsQ.

Its subcellular location is the cell inner membrane. Essential cell division protein. May link together the upstream cell division proteins, which are predominantly cytoplasmic, with the downstream cell division proteins, which are predominantly periplasmic. The protein is Cell division protein FtsB of Ralstonia pickettii (strain 12J).